We begin with the raw amino-acid sequence, 340 residues long: tRNA N6-adenosine threonylcarbamoyltransferase (340 aa).

2 residues coordinate Fe cation: histidine 111 and histidine 115. Residues 134–138 (LVSGG), aspartate 167, glycine 180, and asparagine 276 each bind substrate. Aspartate 304 lines the Fe cation pocket.

The protein belongs to the KAE1 / TsaD family. Fe(2+) is required as a cofactor.

The protein resides in the cytoplasm. It catalyses the reaction L-threonylcarbamoyladenylate + adenosine(37) in tRNA = N(6)-L-threonylcarbamoyladenosine(37) in tRNA + AMP + H(+). Its function is as follows. Required for the formation of a threonylcarbamoyl group on adenosine at position 37 (t(6)A37) in tRNAs that read codons beginning with adenine. Is involved in the transfer of the threonylcarbamoyl moiety of threonylcarbamoyl-AMP (TC-AMP) to the N6 group of A37, together with TsaE and TsaB. TsaD likely plays a direct catalytic role in this reaction. The sequence is that of tRNA N6-adenosine threonylcarbamoyltransferase from Helicobacter pylori (strain Shi470).